A 438-amino-acid chain; its full sequence is Lipoyl synthase, mitochondrial (438 aa).

Residues 1–31 (MAASARGLRTLQSAHSSTTVPRLQLAVSRCY) constitute a mitochondrion transit peptide. The span at 34-57 (TTSPDPPITNSSNSSNSSNSTPTP) shows a compositional bias: low complexity. Residues 34 to 58 (TTSPDPPITNSSNSSNSSNSTPTPK) form a disordered region. Cys148, Cys153, Cys159, Cys179, Cys183, Cys186, and Ser394 together coordinate [4Fe-4S] cluster. A Radical SAM core domain is found at 162–383 (GSSKSAATAT…KERALEMGFL (222 aa)).

This sequence belongs to the radical SAM superfamily. Lipoyl synthase family. It depends on [4Fe-4S] cluster as a cofactor.

It is found in the mitochondrion. It carries out the reaction [[Fe-S] cluster scaffold protein carrying a second [4Fe-4S](2+) cluster] + N(6)-octanoyl-L-lysyl-[protein] + 2 oxidized [2Fe-2S]-[ferredoxin] + 2 S-adenosyl-L-methionine + 4 H(+) = [[Fe-S] cluster scaffold protein] + N(6)-[(R)-dihydrolipoyl]-L-lysyl-[protein] + 4 Fe(3+) + 2 hydrogen sulfide + 2 5'-deoxyadenosine + 2 L-methionine + 2 reduced [2Fe-2S]-[ferredoxin]. It functions in the pathway protein modification; protein lipoylation via endogenous pathway; protein N(6)-(lipoyl)lysine from octanoyl-[acyl-carrier-protein]: step 2/2. Functionally, catalyzes the radical-mediated insertion of two sulfur atoms into the C-6 and C-8 positions of the octanoyl moiety bound to the lipoyl domains of lipoate-dependent enzymes, thereby converting the octanoylated domains into lipoylated derivatives. The chain is Lipoyl synthase, mitochondrial from Paracoccidioides brasiliensis (strain Pb18).